We begin with the raw amino-acid sequence, 159 residues long: ATP synthase subunit b 1 (159 aa).

The chain crosses the membrane as a helical span at residues 5–25; it reads FWAFIGLILFLALLFYFKVPA.

This sequence belongs to the ATPase B chain family. F-type ATPases have 2 components, F(1) - the catalytic core - and F(0) - the membrane proton channel. F(1) has five subunits: alpha(3), beta(3), gamma(1), delta(1), epsilon(1). F(0) has three main subunits: a(1), b(2) and c(10-14). The alpha and beta chains form an alternating ring which encloses part of the gamma chain. F(1) is attached to F(0) by a central stalk formed by the gamma and epsilon chains, while a peripheral stalk is formed by the delta and b chains.

It is found in the cell inner membrane. Functionally, f(1)F(0) ATP synthase produces ATP from ADP in the presence of a proton or sodium gradient. F-type ATPases consist of two structural domains, F(1) containing the extramembraneous catalytic core and F(0) containing the membrane proton channel, linked together by a central stalk and a peripheral stalk. During catalysis, ATP synthesis in the catalytic domain of F(1) is coupled via a rotary mechanism of the central stalk subunits to proton translocation. Component of the F(0) channel, it forms part of the peripheral stalk, linking F(1) to F(0). The polypeptide is ATP synthase subunit b 1 (Bartonella bacilliformis (strain ATCC 35685 / KC583 / Herrer 020/F12,63)).